A 379-amino-acid chain; its full sequence is Elongation factor Ts, mitochondrial (379 aa).

The N-terminal 45 residues, 1–45, are a transit peptide targeting the mitochondrion; that stretch reads MALYRTARRPLQMMLFSRLGNPEQNYSSWARKDASQSAFGMFVRL.

The protein belongs to the EF-Ts family.

Its subcellular location is the mitochondrion. Functionally, associates with the EF-Tu.GDP complex and induces the exchange of GDP to GTP. It remains bound to the aminoacyl-tRNA.EF-Tu.GTP complex up to the GTP hydrolysis stage on the ribosome. The protein is Elongation factor Ts, mitochondrial of Ricinus communis (Castor bean).